Consider the following 181-residue polypeptide: Cytochrome c-type biogenesis protein CcmE (181 aa).

Over 1–8 the chain is Cytoplasmic; sequence MNPRRKSR. Residues 9–29 traverse the membrane as a helical; Signal-anchor for type II membrane protein segment; the sequence is LKVVVSIIFGVAVAAGLTLYA. The Periplasmic segment spans residues 30–181; the sequence is LSQNIDLFYT…TLKTLQGEAN (152 aa). Residues His131 and Tyr135 each coordinate heme. 2 stretches are compositionally biased toward basic and acidic residues: residues 135–148 and 156–166; these read YMPPELGDKLKEQH and ADLKGTSARDK. A disordered region spans residues 135 to 166; the sequence is YMPPELGDKLKEQHGAAGISEADLKGTSARDK.

Belongs to the CcmE/CycJ family.

Its subcellular location is the cell inner membrane. In terms of biological role, heme chaperone required for the biogenesis of c-type cytochromes. Transiently binds heme delivered by CcmC and transfers the heme to apo-cytochromes in a process facilitated by CcmF and CcmH. In Actinobacillus pleuropneumoniae serotype 7 (strain AP76), this protein is Cytochrome c-type biogenesis protein CcmE.